An 87-amino-acid polypeptide reads, in one-letter code: Cell division topological specificity factor (87 aa).

It belongs to the MinE family.

In terms of biological role, prevents the cell division inhibition by proteins MinC and MinD at internal division sites while permitting inhibition at polar sites. This ensures cell division at the proper site by restricting the formation of a division septum at the midpoint of the long axis of the cell. In Neisseria meningitidis serogroup C (strain 053442), this protein is Cell division topological specificity factor.